Here is a 389-residue protein sequence, read N- to C-terminus: Pyruvate synthase subunit PorA (389 aa).

In terms of assembly, heterotetramer of one alpha, one beta, one delta and one gamma chain.

It carries out the reaction 2 oxidized [2Fe-2S]-[ferredoxin] + pyruvate + CoA = 2 reduced [2Fe-2S]-[ferredoxin] + acetyl-CoA + CO2 + H(+). The sequence is that of Pyruvate synthase subunit PorA (porA) from Methanocaldococcus jannaschii (strain ATCC 43067 / DSM 2661 / JAL-1 / JCM 10045 / NBRC 100440) (Methanococcus jannaschii).